The sequence spans 58 residues: Large ribosomal subunit protein uL30 (58 aa).

The protein belongs to the universal ribosomal protein uL30 family. In terms of assembly, part of the 50S ribosomal subunit.

The protein is Large ribosomal subunit protein uL30 of Pelobacter propionicus (strain DSM 2379 / NBRC 103807 / OttBd1).